A 342-amino-acid polypeptide reads, in one-letter code: N-acetyl-gamma-glutamyl-phosphate reductase (342 aa).

C149 is a catalytic residue.

The protein belongs to the NAGSA dehydrogenase family. Type 1 subfamily.

Its subcellular location is the cytoplasm. The catalysed reaction is N-acetyl-L-glutamate 5-semialdehyde + phosphate + NADP(+) = N-acetyl-L-glutamyl 5-phosphate + NADPH + H(+). It participates in amino-acid biosynthesis; L-arginine biosynthesis; N(2)-acetyl-L-ornithine from L-glutamate: step 3/4. Catalyzes the NADPH-dependent reduction of N-acetyl-5-glutamyl phosphate to yield N-acetyl-L-glutamate 5-semialdehyde. In Laribacter hongkongensis (strain HLHK9), this protein is N-acetyl-gamma-glutamyl-phosphate reductase.